The sequence spans 223 residues: NAD(P)H-hydrate epimerase (223 aa).

Positions 9-211 (AIKLDEELMG…ELKDKLHLIL (203 aa)) constitute a YjeF N-terminal domain. Residue 60 to 64 (NNGGD) participates in (6S)-NADPHX binding. K(+) contacts are provided by Asn61 and Asp120. (6S)-NADPHX is bound by residues 124–130 (GFSFKGP) and Asp153. Residue Ser156 participates in K(+) binding.

The protein belongs to the NnrE/AIBP family. It depends on K(+) as a cofactor.

The enzyme catalyses (6R)-NADHX = (6S)-NADHX. It catalyses the reaction (6R)-NADPHX = (6S)-NADPHX. Functionally, catalyzes the epimerization of the S- and R-forms of NAD(P)HX, a damaged form of NAD(P)H that is a result of enzymatic or heat-dependent hydration. This is a prerequisite for the S-specific NAD(P)H-hydrate dehydratase to allow the repair of both epimers of NAD(P)HX. In Entamoeba histolytica (strain ATCC 30459 / HM-1:IMSS / ABRM), this protein is NAD(P)H-hydrate epimerase.